The sequence spans 515 residues: Histidine ammonia-lyase (515 aa).

A cross-link (5-imidazolinone (Ala-Gly)) is located at residues 142 to 144 (ASG). Residue S143 is modified to 2,3-didehydroalanine (Ser).

The protein belongs to the PAL/histidase family. Post-translationally, contains an active site 4-methylidene-imidazol-5-one (MIO), which is formed autocatalytically by cyclization and dehydration of residues Ala-Ser-Gly.

The protein resides in the cytoplasm. It carries out the reaction L-histidine = trans-urocanate + NH4(+). Its pathway is amino-acid degradation; L-histidine degradation into L-glutamate; N-formimidoyl-L-glutamate from L-histidine: step 1/3. The protein is Histidine ammonia-lyase of Bradyrhizobium sp. (strain ORS 278).